A 216-amino-acid chain; its full sequence is Ribosomal RNA small subunit methyltransferase G (216 aa).

Residues G73, L78, A124–E125, and R139 contribute to the S-adenosyl-L-methionine site.

This sequence belongs to the methyltransferase superfamily. RNA methyltransferase RsmG family.

The protein resides in the cytoplasm. Its function is as follows. Specifically methylates the N7 position of guanine in position 518 of 16S rRNA. The chain is Ribosomal RNA small subunit methyltransferase G from Arthrobacter sp. (strain FB24).